Reading from the N-terminus, the 428-residue chain is Putative zinc metalloprotease LL2128 (428 aa).

Histidine 19 serves as a coordination point for Zn(2+). Glutamate 20 is an active-site residue. Histidine 23 contacts Zn(2+). Transmembrane regions (helical) follow at residues 188–210, 354–376, and 401–423; these read GPLN…QGGV, IVYL…IPVL, and IITM…NDIL. Residues 188-282 form the PDZ domain; sequence GPLNNFILGI…SETLSVTPKK (95 aa).

The protein belongs to the peptidase M50B family. It depends on Zn(2+) as a cofactor.

The protein resides in the cell membrane. The chain is Putative zinc metalloprotease LL2128 from Lactococcus lactis subsp. lactis (strain IL1403) (Streptococcus lactis).